Consider the following 152-residue polypeptide: Single-stranded DNA-binding protein, mitochondrial (152 aa).

The transit peptide at Met1–His16 directs the protein to the mitochondrion. Residues Leu30 to His141 form the SSB domain. Ser67 and Ser79 each carry phosphoserine. Residue Lys113 is modified to N6-acetyllysine. Lys122 is subject to N6-succinyllysine.

In terms of assembly, homotetramer. Interacts with MPG/AAG, through inhibition of its glycosylase activity it potentially prevents formation of DNA breaks in ssDNA, ensuring that base removal primarily occurs in dsDNA. Interacts with POLDIP2. Interacts with PRIMPOL. In terms of tissue distribution, expressed in all the layers of the retina (at protein level).

The protein resides in the mitochondrion. Its subcellular location is the mitochondrion matrix. It localises to the mitochondrion nucleoid. Its function is as follows. Binds preferentially and cooperatively to pyrimidine rich single-stranded DNA (ss-DNA). In vitro, required to maintain the copy number of mitochondrial DNA (mtDNA) and plays a crucial role during mtDNA replication by stimulating the activity of the replisome components POLG and TWNK at the replication fork. Promotes the activity of the gamma complex polymerase POLG, largely by organizing the template DNA and eliminating secondary structures to favor ss-DNA conformations that facilitate POLG activity. In addition it is able to promote the 5'-3' unwinding activity of the mtDNA helicase TWNK. May also function in mtDNA repair. This chain is Single-stranded DNA-binding protein, mitochondrial (Ssbp1), found in Mus musculus (Mouse).